A 514-amino-acid chain; its full sequence is Protein p59 (514 aa).

It localises to the virion. The sequence is that of Protein p59 from Lettuce infectious yellows virus (isolate United States/92) (LIYV).